We begin with the raw amino-acid sequence, 435 residues long: Glutamate-1-semialdehyde 2,1-aminomutase (435 aa).

The residue at position 270 (Lys270) is an N6-(pyridoxal phosphate)lysine.

Belongs to the class-III pyridoxal-phosphate-dependent aminotransferase family. HemL subfamily. As to quaternary structure, homodimer. Pyridoxal 5'-phosphate serves as cofactor.

It is found in the cytoplasm. The enzyme catalyses (S)-4-amino-5-oxopentanoate = 5-aminolevulinate. It functions in the pathway porphyrin-containing compound metabolism; protoporphyrin-IX biosynthesis; 5-aminolevulinate from L-glutamyl-tRNA(Glu): step 2/2. The sequence is that of Glutamate-1-semialdehyde 2,1-aminomutase from Wigglesworthia glossinidia brevipalpis.